The chain runs to 94 residues: Putative pterin-4-alpha-carbinolamine dehydratase (94 aa).

It belongs to the pterin-4-alpha-carbinolamine dehydratase family.

It carries out the reaction (4aS,6R)-4a-hydroxy-L-erythro-5,6,7,8-tetrahydrobiopterin = (6R)-L-erythro-6,7-dihydrobiopterin + H2O. The chain is Putative pterin-4-alpha-carbinolamine dehydratase from Mycobacterium leprae (strain Br4923).